A 151-amino-acid chain; its full sequence is MADESNTGSIAAAVAPNADVKAPAAKKKRSPRRQKAVAEPRRAVSETPAAKPRRYSEQQRKEKLKLIETQVTEGKVTLKDAIKSAGISEQTYYQWKRTVKPVEQKAEKRLPTGEELADLVRLEEENQRLRKLLAEKLRAENADLRKRLGLD.

The tract at residues 1–61 (MADESNTGSI…PRRYSEQQRK (61 aa)) is disordered. Residues 11–23 (AAAVAPNADVKAP) show a composition bias toward low complexity. Basic residues predominate over residues 24 to 35 (AAKKKRSPRRQK).

This sequence belongs to the SyrB family.

In terms of biological role, seems to affect the transcription of cya3. May be negatively autoregulated. The polypeptide is Probable transcriptional regulator syrB2 (syrB2) (Rhizobium meliloti (strain 1021) (Ensifer meliloti)).